The chain runs to 1290 residues: DNA-directed RNA polymerase subunit beta' (1290 aa).

Zn(2+)-binding residues include C60, C62, C75, and C78. Mg(2+) is bound by residues D535, D537, and D539. Zn(2+) contacts are provided by C875, C953, C960, and C963.

The protein belongs to the RNA polymerase beta' chain family. In terms of assembly, the RNAP catalytic core consists of 2 alpha, 1 beta, 1 beta' and 1 omega subunit. When a sigma factor is associated with the core the holoenzyme is formed, which can initiate transcription. Mg(2+) is required as a cofactor. The cofactor is Zn(2+).

The catalysed reaction is RNA(n) + a ribonucleoside 5'-triphosphate = RNA(n+1) + diphosphate. Functionally, DNA-dependent RNA polymerase catalyzes the transcription of DNA into RNA using the four ribonucleoside triphosphates as substrates. The protein is DNA-directed RNA polymerase subunit beta' of Nocardioides sp. (strain ATCC BAA-499 / JS614).